Reading from the N-terminus, the 592-residue chain is Inactive heparanase-2 (592 aa).

The first 41 residues, 1 to 41 (MRVLCAFPEAMPSSNSRPPACLAPGALYLALLLHLSLSSQA), serve as a signal peptide directing secretion. N-linked (GlcNAc...) asparagine glycosylation is found at Asn254 and Asn392.

This sequence belongs to the glycosyl hydrolase 79 family. In terms of assembly, interacts with HPSE. Interacts with SDC1 (via glycan chains). As to expression, widely expressed, with the highest expression in brain, mammary gland, prostate, small intestine, testis and uterus. In the central nervous system, expressed in the spinal cord, caudate nucleus, thalamus, substantia nigra, medulla oblongata, putamen and pons. In the urinary bladder, expressed in longitudinal and circular layers of detrusor muscle. Found both in normal and cancer tissues.

It localises to the secreted. Its subcellular location is the extracellular space. The protein localises to the extracellular matrix. Its function is as follows. Binds heparin and heparan sulfate with high affinity, but lacks heparanase activity. Inhibits HPSE, possibly by competing for its substrates (in vitro). This is Inactive heparanase-2 (HPSE2) from Homo sapiens (Human).